The following is a 302-amino-acid chain: F-box protein SKIP19 (302 aa).

The F-box domain occupies 16 to 63 (STNWTELPPELTSAILHRLGAIEILENAQKVCRSWRRVCKDPSMWRKI).

In terms of assembly, part of a SCF (ASK-cullin-F-box) protein ligase complex. Interacts with CUL1 and SPK1B/ASK2.

The protein localises to the nucleus. It participates in protein modification; protein ubiquitination. Functionally, component of SCF(ASK-cullin-F-box) E3 ubiquitin ligase complexes, which may mediate the ubiquitination and subsequent proteasomal degradation of target proteins. The protein is F-box protein SKIP19 (SKIP19) of Arabidopsis thaliana (Mouse-ear cress).